Consider the following 135-residue polypeptide: uncharacterized protein (135 aa).

This is an uncharacterized protein from Homo sapiens (Human).